The following is a 229-amino-acid chain: Ribose-5-phosphate isomerase A (229 aa).

Residues 28 to 31, 85 to 88, and 98 to 101 each bind substrate; these read TGST, DGAD, and KGRG. Glu107 acts as the Proton acceptor in catalysis. Substrate is bound at residue Lys125.

Belongs to the ribose 5-phosphate isomerase family. Homodimer.

It catalyses the reaction aldehydo-D-ribose 5-phosphate = D-ribulose 5-phosphate. Its pathway is carbohydrate degradation; pentose phosphate pathway; D-ribose 5-phosphate from D-ribulose 5-phosphate (non-oxidative stage): step 1/1. Functionally, catalyzes the reversible conversion of ribose-5-phosphate to ribulose 5-phosphate. In Pyrococcus furiosus (strain ATCC 43587 / DSM 3638 / JCM 8422 / Vc1), this protein is Ribose-5-phosphate isomerase A.